We begin with the raw amino-acid sequence, 301 residues long: Sulfate adenylyltransferase subunit 2 (301 aa).

The interval R279–F301 is disordered.

The protein belongs to the PAPS reductase family. CysD subfamily. As to quaternary structure, sulfate-activating enzymes, NodP and NodQ, may be physically associated.

It catalyses the reaction sulfate + ATP + H(+) = adenosine 5'-phosphosulfate + diphosphate. Its function is as follows. Proposed to provide activated sulfate for transfer to nod factor. The chain is Sulfate adenylyltransferase subunit 2 (nodP) from Rhizobium sp. (strain N33).